A 451-amino-acid polypeptide reads, in one-letter code: Glucose-6-phosphate isomerase (451 aa).

Glutamate 291 acts as the Proton donor in catalysis. Residues histidine 312 and lysine 426 contribute to the active site.

The protein belongs to the GPI family.

The protein localises to the cytoplasm. The catalysed reaction is alpha-D-glucose 6-phosphate = beta-D-fructose 6-phosphate. The protein operates within carbohydrate biosynthesis; gluconeogenesis. Its pathway is carbohydrate degradation; glycolysis; D-glyceraldehyde 3-phosphate and glycerone phosphate from D-glucose: step 2/4. Its function is as follows. Catalyzes the reversible isomerization of glucose-6-phosphate to fructose-6-phosphate. In Thermoanaerobacter sp. (strain X514), this protein is Glucose-6-phosphate isomerase.